The primary structure comprises 454 residues: tRNA modification GTPase MnmE (454 aa).

Residues Arg23, Glu80, and Lys120 each contribute to the (6S)-5-formyl-5,6,7,8-tetrahydrofolate site. The TrmE-type G domain occupies 216–377 (GMKVVIAGRP…LRDHLKSSMG (162 aa)). Asn226 provides a ligand contact to K(+). GTP contacts are provided by residues 226 to 231 (NAGKSS), 245 to 251 (TDIAGTT), 270 to 273 (DTAG), 335 to 338 (NKAD), and 358 to 360 (SAR). Residue Ser230 coordinates Mg(2+). Residues Thr245, Ile247, and Thr250 each contribute to the K(+) site. Thr251 provides a ligand contact to Mg(2+). Lys454 serves as a coordination point for (6S)-5-formyl-5,6,7,8-tetrahydrofolate.

The protein belongs to the TRAFAC class TrmE-Era-EngA-EngB-Septin-like GTPase superfamily. TrmE GTPase family. Homodimer. Heterotetramer of two MnmE and two MnmG subunits. K(+) serves as cofactor.

It localises to the cytoplasm. Exhibits a very high intrinsic GTPase hydrolysis rate. Involved in the addition of a carboxymethylaminomethyl (cmnm) group at the wobble position (U34) of certain tRNAs, forming tRNA-cmnm(5)s(2)U34. The chain is tRNA modification GTPase MnmE from Erwinia tasmaniensis (strain DSM 17950 / CFBP 7177 / CIP 109463 / NCPPB 4357 / Et1/99).